The chain runs to 434 residues: Putative D-alanyl-D-alanine carboxypeptidase (434 aa).

A helical; Signal-anchor membrane pass occupies residues 7–25 (YLSLLAVSCSVSAAKYPVL).

Belongs to the peptidase S12 family. YfeW subfamily.

The protein resides in the cell inner membrane. The catalysed reaction is Preferential cleavage: (Ac)2-L-Lys-D-Ala-|-D-Ala. Also transpeptidation of peptidyl-alanyl moieties that are N-acyl substituents of D-alanine.. This Escherichia coli O157:H7 protein is Putative D-alanyl-D-alanine carboxypeptidase.